We begin with the raw amino-acid sequence, 365 residues long: MGSTGETQITPTHISDEEANLFAMQLASASVLPMILKSALELDLLEIIAKAGPGAQISPIEIASQLPTTNPDAPVMLDRMLRLLACYIILTCSVRTQQDGKVQRLYGLATVAKYLVKNEDGVSISALNLMNQDKVLMESWYHLKDAVLDGGIPFNKAYGMTAFEYHGTDPRFNKVFNKGMSDHSTITMKKILETYTGFEGLKSLVDVGGGTGAVINTIVSKYPTIKGINFDLPHVIEDAPSYPGVEHVGGDMFVSIPKADAVFMKWICHDWSDEHCLKFLKNCYEALPDNGKVIVAECILPVAPDSSLATKGVVHIDVIMLAHNPGGKERTQKEFEDLAKGAGFQGFKVHCNAFNTYIMEFLKKV.

(E)-ferulate is bound at residue asparagine 131. S-adenosyl-L-homocysteine is bound by residues glycine 208, aspartate 231, aspartate 251, methionine 252, methionine 264, and lysine 265. The active-site Proton acceptor is the histidine 269. Residue aspartate 270 coordinates (E)-5-hydroxyferulate. Residues glutamate 297 and glutamate 329 contribute to the active site.

It belongs to the class I-like SAM-binding methyltransferase superfamily. Cation-independent O-methyltransferase family. COMT subfamily. Homodimer. More abundant in roots and stems.

The enzyme catalyses (E)-caffeate + S-adenosyl-L-methionine = (E)-ferulate + S-adenosyl-L-homocysteine + H(+). The catalysed reaction is (E)-5-hydroxyferulate + S-adenosyl-L-methionine = (E)-sinapate + S-adenosyl-L-homocysteine + H(+). It functions in the pathway aromatic compound metabolism; phenylpropanoid biosynthesis. Functionally, catalyzes the conversion of caffeic acid to ferulic acid and of 5-hydroxyferulic acid to sinapic acid. The resulting products may subsequently be converted to the corresponding alcohols that are incorporated into lignins. This Medicago sativa (Alfalfa) protein is Caffeic acid 3-O-methyltransferase.